Reading from the N-terminus, the 265-residue chain is uncharacterized protein (265 aa).

Residues 122–145 (THYRDNGQTPPRDTRPHGGISLGG) are disordered.

This is an uncharacterized protein from Zymomonas mobilis subsp. mobilis (strain ATCC 31821 / ZM4 / CP4).